The sequence spans 414 residues: Serine/threonine transporter SstT (414 aa).

The Cytoplasmic portion of the chain corresponds to 2 to 15 (TTQRSPGLFRRLAH). Residues 16-36 (GSLVKQILVGLVLGILLAWIS) traverse the membrane as a helical segment. Residues 37 to 45 (KPAAEAVGL) lie on the Periplasmic side of the membrane. The helical transmembrane segment at 46-66 (LGTLFVGALKAVAPILVLMLV) threads the bilayer. The Cytoplasmic portion of the chain corresponds to 67-83 (MASIANHQHGQKTNIRP). Residues 84-104 (ILFLYLLGTFSAALAAVVFSF) form a helical membrane-spanning segment. Topologically, residues 105–142 (AFPSTLHLSSSAGDISPPSGIVEVMRGLVMSMVSNPID) are periplasmic. The chain crosses the membrane as a helical span at residues 143–163 (ALLKGNYIGILVWAIGLGFAL). The Cytoplasmic segment spans residues 164–179 (RHGNETTKNLVNDLSN). The helical transmembrane segment at 180 to 200 (AVTFMVKLVIRFAPIGIFGLV) threads the bilayer. Residues 201-217 (SSTLATTGFSTLWGYAQ) lie on the Periplasmic side of the membrane. Residues 218 to 238 (LLVVLVGCMLLVALVVNPLLV) form a helical membrane-spanning segment. Over 239–299 (WWKIRRNPFP…VSIPLGATIN (61 aa)) the chain is Cytoplasmic. Residues 300-320 (MAGAAITITVLTLAAVNTLGI) form a helical membrane-spanning segment. Over 321–331 (PVDLPTALLLS) the chain is Periplasmic. Residues 332–352 (VVASLCACGASGVAGGSLLLI) form a helical membrane-spanning segment. Residues 353 to 414 (PLACNMFGIS…DRLANSALRN (62 aa)) lie on the Cytoplasmic side of the membrane.

This sequence belongs to the dicarboxylate/amino acid:cation symporter (DAACS) (TC 2.A.23) family.

Its subcellular location is the cell inner membrane. It carries out the reaction L-serine(in) + Na(+)(in) = L-serine(out) + Na(+)(out). The catalysed reaction is L-threonine(in) + Na(+)(in) = L-threonine(out) + Na(+)(out). Its function is as follows. Involved in the import of serine and threonine into the cell, with the concomitant import of sodium (symport system). The polypeptide is Serine/threonine transporter SstT (Shigella boydii serotype 4 (strain Sb227)).